We begin with the raw amino-acid sequence, 381 residues long: Erythronate-4-phosphate dehydrogenase (381 aa).

2 residues coordinate substrate: serine 45 and threonine 67. Residues aspartate 148, 207 to 209 (ASR), and aspartate 233 each bind NAD(+). Arginine 209 is a catalytic residue. Glutamate 238 is an active-site residue. Histidine 255 functions as the Proton donor in the catalytic mechanism. Residue glycine 258 coordinates NAD(+).

This sequence belongs to the D-isomer specific 2-hydroxyacid dehydrogenase family. PdxB subfamily. In terms of assembly, homodimer.

It is found in the cytoplasm. It catalyses the reaction 4-phospho-D-erythronate + NAD(+) = (R)-3-hydroxy-2-oxo-4-phosphooxybutanoate + NADH + H(+). It participates in cofactor biosynthesis; pyridoxine 5'-phosphate biosynthesis; pyridoxine 5'-phosphate from D-erythrose 4-phosphate: step 2/5. Functionally, catalyzes the oxidation of erythronate-4-phosphate to 3-hydroxy-2-oxo-4-phosphonooxybutanoate. This is Erythronate-4-phosphate dehydrogenase from Idiomarina loihiensis (strain ATCC BAA-735 / DSM 15497 / L2-TR).